The following is a 332-amino-acid chain: Cysteine and histidine-rich domain-containing protein 1 (332 aa).

At Ala-2 the chain carries N-acetylalanine. The segment at 2–77 (ALLCYNRGCG…KPPEPVKPEV (76 aa)) is interaction with PPP5C. Zn(2+) is bound by residues Cys-5, Cys-10, Cys-24, His-27, Cys-42, and Cys-43. CHORD domains are found at residues 5 to 64 (CYNR…KGRH) and 157 to 216 (CKNG…TGKH). Thr-47 bears the Phosphothreonine mark. Ser-51 carries the phosphoserine modification. Residues Cys-59, His-64, Cys-157, Cys-162, Cys-176, His-179, Cys-194, Cys-195, Cys-211, and His-216 each coordinate Zn(2+). The disordered stretch occupies residues 61 to 82 (KGRHNSEKPPEPVKPEVKTTEK). Over residues 64–82 (HNSEKPPEPVKPEVKTTEK) the composition is skewed to basic and acidic residues. The interval 65–316 (NSEKPPEPVK…AEPMQWASLE (252 aa)) is interaction with HSP90AA1 and HSP90AB1. The CS domain maps to 227–316 (VVPCRHDWHQ…AEPMQWASLE (90 aa)).

As to quaternary structure, interacts with HSP90AA1, HSP90AB1, PPP5C, ROCK1 and ROCK2.

In terms of biological role, regulates centrosome duplication, probably by inhibiting the kinase activity of ROCK2. Proposed to act as co-chaperone for HSP90. May play a role in the regulation of NOD1 via a HSP90 chaperone complex. In vitro, has intrinsic chaperone activity. This function may be achieved by inhibiting association of ROCK2 with NPM1. Plays a role in ensuring the localization of the tyrosine kinase receptor EGFR to the plasma membrane, and thus ensures the subsequent regulation of EGFR activity and EGF-induced actin cytoskeleton remodeling. Involved in stress response. Prevents tumorigenesis. The chain is Cysteine and histidine-rich domain-containing protein 1 (CHORDC1) from Sus scrofa (Pig).